A 198-amino-acid polypeptide reads, in one-letter code: Holliday junction resolvase RecU (198 aa).

The tract at residues 1–22 (MVNYPHKVSSQKRQTSLSQPKN) is disordered. The segment covering 11 to 22 (QKRQTSLSQPKN) has biased composition (polar residues). Residues Thr-81, Asp-83, Glu-96, and Gln-115 each coordinate Mg(2+).

This sequence belongs to the RecU family. The cofactor is Mg(2+).

The protein resides in the cytoplasm. It catalyses the reaction Endonucleolytic cleavage at a junction such as a reciprocal single-stranded crossover between two homologous DNA duplexes (Holliday junction).. In terms of biological role, endonuclease that resolves Holliday junction intermediates in genetic recombination. Cleaves mobile four-strand junctions by introducing symmetrical nicks in paired strands. Promotes annealing of linear ssDNA with homologous dsDNA. Required for DNA repair, homologous recombination and chromosome segregation. This chain is Holliday junction resolvase RecU, found in Streptococcus pneumoniae serotype 2 (strain D39 / NCTC 7466).